Reading from the N-terminus, the 59-residue chain is Sec-independent protein translocase protein TatA (59 aa).

The chain crosses the membrane as a helical span at residues 1-21 (MGRLGLTEILVIVGIVILLFG).

The protein belongs to the TatA/E family. In terms of assembly, forms a complex with TatC.

It is found in the cell inner membrane. In terms of biological role, part of the twin-arginine translocation (Tat) system that transports large folded proteins containing a characteristic twin-arginine motif in their signal peptide across membranes. TatA could form the protein-conducting channel of the Tat system. The chain is Sec-independent protein translocase protein TatA from Flavobacterium johnsoniae (strain ATCC 17061 / DSM 2064 / JCM 8514 / BCRC 14874 / CCUG 350202 / NBRC 14942 / NCIMB 11054 / UW101) (Cytophaga johnsonae).